A 423-amino-acid polypeptide reads, in one-letter code: 3-phosphoshikimate 1-carboxyvinyltransferase (423 aa).

Positions 21, 22, and 26 each coordinate 3-phosphoshikimate. Lysine 21 is a phosphoenolpyruvate binding site. 2 residues coordinate phosphoenolpyruvate: glycine 92 and arginine 120. Serine 164, glutamine 166, aspartate 312, and lysine 339 together coordinate 3-phosphoshikimate. Phosphoenolpyruvate is bound at residue glutamine 166. Aspartate 312 functions as the Proton acceptor in the catalytic mechanism. Phosphoenolpyruvate is bound by residues arginine 343 and arginine 385.

Belongs to the EPSP synthase family. In terms of assembly, monomer.

The protein localises to the cytoplasm. The catalysed reaction is 3-phosphoshikimate + phosphoenolpyruvate = 5-O-(1-carboxyvinyl)-3-phosphoshikimate + phosphate. It functions in the pathway metabolic intermediate biosynthesis; chorismate biosynthesis; chorismate from D-erythrose 4-phosphate and phosphoenolpyruvate: step 6/7. Functionally, catalyzes the transfer of the enolpyruvyl moiety of phosphoenolpyruvate (PEP) to the 5-hydroxyl of shikimate-3-phosphate (S3P) to produce enolpyruvyl shikimate-3-phosphate and inorganic phosphate. This chain is 3-phosphoshikimate 1-carboxyvinyltransferase, found in Thermoanaerobacter pseudethanolicus (strain ATCC 33223 / 39E) (Clostridium thermohydrosulfuricum).